Consider the following 321-residue polypeptide: Malate dehydrogenase (321 aa).

Residues Gly11–Gly16 and Asp35 contribute to the NAD(+) site. Residues Arg84 and Arg90 each contribute to the substrate site. Residues Asn97 and Ile120 to Asn122 contribute to the NAD(+) site. Substrate-binding residues include Asn122 and Arg153. His177 serves as the catalytic Proton acceptor.

The protein belongs to the LDH/MDH superfamily. MDH type 3 family.

The catalysed reaction is (S)-malate + NAD(+) = oxaloacetate + NADH + H(+). In terms of biological role, catalyzes the reversible oxidation of malate to oxaloacetate. This Rickettsia peacockii (strain Rustic) protein is Malate dehydrogenase.